Reading from the N-terminus, the 262-residue chain is Acetylglutamate kinase (262 aa).

Residues 46–47, R68, and N160 each bind substrate; that span reads GG.

The protein belongs to the acetylglutamate kinase family. ArgB subfamily.

It localises to the cytoplasm. It catalyses the reaction N-acetyl-L-glutamate + ATP = N-acetyl-L-glutamyl 5-phosphate + ADP. Its pathway is amino-acid biosynthesis; L-arginine biosynthesis; N(2)-acetyl-L-ornithine from L-glutamate: step 2/4. Functionally, catalyzes the ATP-dependent phosphorylation of N-acetyl-L-glutamate. The polypeptide is Acetylglutamate kinase (Shewanella amazonensis (strain ATCC BAA-1098 / SB2B)).